A 448-amino-acid polypeptide reads, in one-letter code: Carbon catabolite repressor protein 4 homolog 3 (448 aa).

Residues 50-67 show a composition bias toward low complexity; sequence SSTSGPSDSNPESSSNRS. The interval 50–92 is disordered; it reads SSTSGPSDSNPESSSNRSYSRRWQNPLPRRQHPDQIPSSQIAR. Residue Glu162 coordinates Mg(2+).

It belongs to the CCR4/nocturin family. Component of the CCR4-NOT complex, at least composed of CRR4 and CAF1 proteins. Mg(2+) serves as cofactor.

The protein localises to the nucleus. It is found in the cytoplasm. The enzyme catalyses Exonucleolytic cleavage of poly(A) to 5'-AMP.. Its function is as follows. Acts as a catalytic component of the CCR4-NOT core complex, which in the nucleus seems to be a general transcription factor, and in the cytoplasm the major mRNA deadenylase involved in mRNA turnover. This Arabidopsis thaliana (Mouse-ear cress) protein is Carbon catabolite repressor protein 4 homolog 3 (CCR4-3).